A 318-amino-acid polypeptide reads, in one-letter code: NADH-ubiquinone oxidoreductase chain 1 (318 aa).

Transmembrane regions (helical) follow at residues 2–22 (FMIN…FLTL), 68–88 (ISMF…MWTP), 100–120 (LGVL…LWSG), 146–166 (LAII…PTLI), 171–191 (HMWL…STLA), 222–242 (LFFL…TILF), 253–273 (ELYT…FLWV), and 293–313 (FLPL…ITAG).

The protein belongs to the complex I subunit 1 family. As to quaternary structure, core subunit of respiratory chain NADH dehydrogenase (Complex I) which is composed of 45 different subunits.

It localises to the mitochondrion inner membrane. It carries out the reaction a ubiquinone + NADH + 5 H(+)(in) = a ubiquinol + NAD(+) + 4 H(+)(out). Core subunit of the mitochondrial membrane respiratory chain NADH dehydrogenase (Complex I) which catalyzes electron transfer from NADH through the respiratory chain, using ubiquinone as an electron acceptor. Essential for the catalytic activity and assembly of complex I. This Hipposideros diadema (Diadem leaf-nosed bat) protein is NADH-ubiquinone oxidoreductase chain 1 (MT-ND1).